The sequence spans 457 residues: Cyclic dof factor 2 (457 aa).

Residues 1–130 (MADPAIKLFG…GGTACSQEGK (130 aa)) form a disordered region. Residues 22 to 35 (DSSSSYTGFLTETQ) show a composition bias toward polar residues. Acidic residues-rich tracts occupy residues 45 to 54 (TGDDDDEEMG) and 62 to 73 (EGDDVGDGGGES). Basic and acidic residues-rich tracts occupy residues 74–94 (ETDK…RNES) and 106–118 (EKTE…KTNE). The Dof-type zinc-finger motif lies at 138–192 (LPCPRCNSMETKFCYYNNYNVNQPRHFCKKCQRYWTAGGTMRNVPVGAGRRKNKS). Residues cysteine 140, cysteine 143, cysteine 165, and cysteine 168 each contribute to the Zn(2+) site. 2 disordered regions span residues 334–377 (QPNS…KSKP) and 417–457 (AFRS…HESS). The segment covering 337–346 (SPSGSNPNSP) has biased composition (low complexity).

In terms of assembly, interacts with ADO2 (via kelch repeats) and ADO3 (via kelch repeats). In terms of tissue distribution, expressed in the vasculature of cotyledons and hypocotyls, leaves and roots.

The protein resides in the nucleus. Functionally, transcription factor that binds specifically to a 5'-AA[AG]G-3' consensus core sequence. Regulates a photoperiodic flowering response. Transcriptional repressor of 'CONSTANS' expression. The stability of CDF2 is controlled by 'GIGANTEA' and redundantly by ADO3, ADO2 and/or ADO1. In Arabidopsis thaliana (Mouse-ear cress), this protein is Cyclic dof factor 2 (CDF2).